The chain runs to 274 residues: Large ribosomal subunit protein uL2 (274 aa).

Positions 223-274 (VAMNPVDHPHGGGEGRTSGGRHPVTPWGVPTKGYKTRSNKRTDKYIVRRRNK) are disordered.

This sequence belongs to the universal ribosomal protein uL2 family. As to quaternary structure, part of the 50S ribosomal subunit. Forms a bridge to the 30S subunit in the 70S ribosome.

Its function is as follows. One of the primary rRNA binding proteins. Required for association of the 30S and 50S subunits to form the 70S ribosome, for tRNA binding and peptide bond formation. It has been suggested to have peptidyltransferase activity; this is somewhat controversial. Makes several contacts with the 16S rRNA in the 70S ribosome. This chain is Large ribosomal subunit protein uL2, found in Shewanella putrefaciens (strain CN-32 / ATCC BAA-453).